Consider the following 722-residue polypeptide: Polyribonucleotide nucleotidyltransferase (722 aa).

Mg(2+)-binding residues include Asp487 and Asp493. The KH domain maps to 554–613 (PRIETFKIPTDKIREVIGTGGKVIREIVEKTGAKVNIEDDGTVKVASSDGESIKAAIKWI). Residues 623–691 (GEIYEGTVVK…DRGKTRLSMK (69 aa)) enclose the S1 motif domain. The tract at residues 697-722 (TGEDLEAKQKAEAKAEGEAPAQAAGE) is disordered. The span at 701 to 713 (LEAKQKAEAKAEG) shows a compositional bias: basic and acidic residues.

Belongs to the polyribonucleotide nucleotidyltransferase family. The cofactor is Mg(2+).

It is found in the cytoplasm. The catalysed reaction is RNA(n+1) + phosphate = RNA(n) + a ribonucleoside 5'-diphosphate. Its function is as follows. Involved in mRNA degradation. Catalyzes the phosphorolysis of single-stranded polyribonucleotides processively in the 3'- to 5'-direction. In Rhodopseudomonas palustris (strain ATCC BAA-98 / CGA009), this protein is Polyribonucleotide nucleotidyltransferase.